Here is a 323-residue protein sequence, read N- to C-terminus: Syntaxin-42 (323 aa).

Residues 1–302 (MATRNRTTVY…QREGAMVKCA (302 aa)) are Cytoplasmic-facing. A t-SNARE coiled-coil homology domain is found at 227-289 (QHVSAERERE…EEGYKQLQKA (63 aa)). A helical; Anchor for type IV membrane protein membrane pass occupies residues 303–323 (TILLVLCLIMIVLLILKNILF).

This sequence belongs to the syntaxin family. As to quaternary structure, interacts with VTI12 and SYP61 to form a t-SNARE complex and with VPS45. Expressed at low levels in roots, stems, flowers and leaves.

Its subcellular location is the golgi apparatus. It is found in the trans-Golgi network membrane. Its function is as follows. Contributes to the regulation of secretory and vacuolar transport pathways in the post-Golgi network, and to the maintenance of the Golgi apparatus and trans-Golgi network (TGN) morphologies. Vesicle trafficking protein that functions in the secretory pathway and mediates liposome fusion. Required for extracellular resistance responses to a fungal pathogen. Also involved in the protection of chloroplasts from salicylic acid-dependent biotic stress. In Arabidopsis thaliana (Mouse-ear cress), this protein is Syntaxin-42.